Reading from the N-terminus, the 767-residue chain is Golgin subfamily A member 1 (767 aa).

The interval Thr-13 to Ser-58 is disordered. A phosphoserine mark is found at Ser-30, Ser-36, Ser-41, Ser-47, Ser-50, and Ser-51. Residues Ser-50–Ile-657 are a coiled coil. The 50-residue stretch at Thr-688–Thr-737 folds into the GRIP domain. The interval Lys-748–Ser-767 is disordered.

As to quaternary structure, interacts with RAB6A. Directly interacts with TBC1D23. Interacts with FAM91A1; this interaction may be mediated by TBC1D23. Interacts with ARL1; this interaction recruits Golgin-97/GOLGA1 onto the Golgi apparatus. Post-translationally, MARylated by PARP12; MARylation is required for basolateral export of E-Cadherin.

It is found in the golgi apparatus membrane. It localises to the golgi apparatus. The protein localises to the trans-Golgi network membrane. Its subcellular location is the cytoplasmic vesicle. The protein resides in the secretory vesicle. It is found in the acrosome. Functionally, involved in vesicular trafficking at the Golgi apparatus level. Involved in endosome-to-Golgi trafficking. Mechanistically, captures transport vesicles arriving from endosomes via the protein TBC1D23. Recognized vesicles are then tethered to the trans-Golgi before subsequent SNARE engagement and vesicle fusion. Selectively regulates E-cadherin transport from the trans-Golgi network in tubulovesicular carriers. (Microbial infection) Plays an important role in poxvirus morphogenesis. Translocates into the viral factories where it may transport the membrane fragments and associated protein factors important for virus maturation to the sites of virion assembly. The polypeptide is Golgin subfamily A member 1 (GOLGA1) (Homo sapiens (Human)).